Reading from the N-terminus, the 169-residue chain is Ribosome maturation factor RimP (169 aa).

This sequence belongs to the RimP family.

It localises to the cytoplasm. Its function is as follows. Required for maturation of 30S ribosomal subunits. The chain is Ribosome maturation factor RimP from Koribacter versatilis (strain Ellin345).